A 663-amino-acid polypeptide reads, in one-letter code: UvrABC system protein B (663 aa).

The region spanning 31-271 (DNIESGEKAQ…EQSISKIQAE (241 aa)) is the Helicase ATP-binding domain. 44 to 51 (GATGTGKT) is an ATP binding site. The Beta-hairpin motif lies at 97-120 (YYDYYQPEAYVPSSDTYIEKDSSV). A Helicase C-terminal domain is found at 435–601 (QMDDLLGEIN…TIKKDIRDLI (167 aa)). One can recognise a UVR domain in the interval 627–662 (QEAIKQLQKNMQEAAELLDFELAAQLRDLILELKAI).

Belongs to the UvrB family. Forms a heterotetramer with UvrA during the search for lesions. Interacts with UvrC in an incision complex.

The protein localises to the cytoplasm. In terms of biological role, the UvrABC repair system catalyzes the recognition and processing of DNA lesions. A damage recognition complex composed of 2 UvrA and 2 UvrB subunits scans DNA for abnormalities. Upon binding of the UvrA(2)B(2) complex to a putative damaged site, the DNA wraps around one UvrB monomer. DNA wrap is dependent on ATP binding by UvrB and probably causes local melting of the DNA helix, facilitating insertion of UvrB beta-hairpin between the DNA strands. Then UvrB probes one DNA strand for the presence of a lesion. If a lesion is found the UvrA subunits dissociate and the UvrB-DNA preincision complex is formed. This complex is subsequently bound by UvrC and the second UvrB is released. If no lesion is found, the DNA wraps around the other UvrB subunit that will check the other stand for damage. The protein is UvrABC system protein B of Streptococcus equi subsp. zooepidemicus (strain MGCS10565).